We begin with the raw amino-acid sequence, 500 residues long: Protein farnesyltransferase subunit beta (500 aa).

The disordered stretch occupies residues 117–140 (LQNDDNNGNNNNRENNQNGGGFGG). A compositionally biased stretch (low complexity) spans 119-133 (NDDNNGNNNNRENNQ). PFTB repeat units follow at residues 121–162 (DNNG…YVIG), 172–213 (REAM…SMLN), 220–261 (ERGV…SILN), 268–309 (MNSL…IIIQ), and 343–384 (QEYV…SLSQ). (2E,6E)-farnesyl diphosphate contacts are provided by residues 246–249 (HGGY) and 288–291 (RTNK). Residues aspartate 294 and cysteine 296 each coordinate Zn(2+). A (2E,6E)-farnesyl diphosphate-binding site is contributed by 297-300 (YSYW). Histidine 372 contacts Zn(2+). The tract at residues 402–451 (FEQPSPPINKKSTNVFTISNNNNNNNNKNNNSDDNNNNSNNNNNNSENQL) is disordered. Residues 420–449 (SNNNNNNNNKNNNSDDNNNNSNNNNNNSEN) show a composition bias toward low complexity.

This sequence belongs to the protein prenyltransferase subunit beta family. Heterodimer of fntA and fntB (farnesyltransferase). Heterodimer of an alpha and a beta subunit. It depends on Zn(2+) as a cofactor.

The catalysed reaction is L-cysteinyl-[protein] + (2E,6E)-farnesyl diphosphate = S-(2E,6E)-farnesyl-L-cysteinyl-[protein] + diphosphate. Functionally, catalyzes the transfer of a farnesyl moiety from farnesyl diphosphate to a cysteine at the fourth position from the C-terminus of several proteins. The beta subunit is responsible for peptide-binding. This chain is Protein farnesyltransferase subunit beta (fntB), found in Dictyostelium discoideum (Social amoeba).